Consider the following 549-residue polypeptide: MKFNFKLILIILIINQILIINCKENKILEIYKSGNICPYPLHYRERTGSDDHDFDLGFVYARNDSNCLLPCPSPIYTSQEVNTLSLMIKITGTISFIASLILLLIYSPLINRMGYNRHTIGIFFLTFSVFLIMLTDIIYVHHGNDLICPQSHRYSRQNDSGCTITGILFQYGCIAAVLFWATLSLDLYLTLKKISTKKVEKWYLIILTLIALILTFVPLVKKSYGYLVTGLACWILDSTDQIIFFWAPFTAILGIGSILIVLVVYEIYKISKITKQNRGIFQSHIRPLLMVLFIFGQFLFILAFNALINNKYDEYSARMDSYIDCLFSSSSYSYLCRLKTFPFEMEFIVLFFLRLIGIEVLIFYGFTQQTKKILLHSFLVNNIFFKKYFIRLDGASLDFSTVDEELKVVNFSCNNNNNNNNSNSNSNSNLNNNLNNNLNNNNLNNNNNLNNLNNLNINNNLKNSQNNLNNSQQNEPLSSQKLSENGNVNVFMVESFDNNNSMINQFKHLEEKNNIILNSIISPVQEEQYEEDEINNKNINNNSNNDENN.

A signal peptide spans 1-22 (MKFNFKLILIILIINQILIINC). At 23–89 (KENKILEIYK…EVNTLSLMIK (67 aa)) the chain is on the extracellular side. The N-linked (GlcNAc...) asparagine glycan is linked to asparagine 63. A helical transmembrane segment spans residues 90–110 (ITGTISFIASLILLLIYSPLI). The Cytoplasmic portion of the chain corresponds to 111 to 119 (NRMGYNRHT). The chain crosses the membrane as a helical span at residues 120 to 140 (IGIFFLTFSVFLIMLTDIIYV). At 141–162 (HHGNDLICPQSHRYSRQNDSGC) the chain is on the extracellular side. An N-linked (GlcNAc...) asparagine glycan is attached at asparagine 158. Residues 163 to 183 (TITGILFQYGCIAAVLFWATL) form a helical membrane-spanning segment. Residues 184-198 (SLDLYLTLKKISTKK) are Cytoplasmic-facing. Residues 199–219 (VEKWYLIILTLIALILTFVPL) traverse the membrane as a helical segment. At 220–241 (VKKSYGYLVTGLACWILDSTDQ) the chain is on the extracellular side. The helical transmembrane segment at 242-262 (IIFFWAPFTAILGIGSILIVL) threads the bilayer. Topologically, residues 263–287 (VVYEIYKISKITKQNRGIFQSHIRP) are cytoplasmic. The helical transmembrane segment at 288–308 (LLMVLFIFGQFLFILAFNALI) threads the bilayer. At 309-346 (NNKYDEYSARMDSYIDCLFSSSSYSYLCRLKTFPFEME) the chain is on the extracellular side. The helical transmembrane segment at 347–367 (FIVLFFLRLIGIEVLIFYGFT) threads the bilayer. Topologically, residues 368–549 (QQTKKILLHS…NNNSNNDENN (182 aa)) are cytoplasmic. 2 stretches are compositionally biased toward low complexity: residues 417 to 474 (NNNN…SQQN) and 536 to 549 (NKNI…DENN). 2 disordered regions span residues 417 to 483 (NNNN…QKLS) and 528 to 549 (QYEE…DENN). The stretch at 432-475 (NNLNNNLNNNNLNNNNNLNNLNNLNINNNLKNSQNNLNNSQQNE) forms a coiled coil.

This sequence belongs to the G-protein coupled receptor Fz/Smo family.

The protein localises to the membrane. This chain is Frizzled/smoothened-like sans CRD protein A (fscA), found in Dictyostelium discoideum (Social amoeba).